The sequence spans 73 residues: Pollen allergen Amb t 5 (73 aa).

Positions 1–20 (MKNIFMLTLFILIITSTIKA) are cleaved as a signal peptide. A propeptide spanning residues 21 to 33 (IGSTNEVDEIKQE) is cleaved from the precursor. Intrachain disulfides connect cysteine 38–cysteine 68, cysteine 44–cysteine 59, cysteine 51–cysteine 61, and cysteine 52–cysteine 72.

As to quaternary structure, monomer.

The sequence is that of Pollen allergen Amb t 5 from Ambrosia trifida (Giant ragweed).